The sequence spans 108 residues: Phosphoribosyl-ATP pyrophosphatase (108 aa).

Belongs to the PRA-PH family.

Its subcellular location is the cytoplasm. It carries out the reaction 1-(5-phospho-beta-D-ribosyl)-ATP + H2O = 1-(5-phospho-beta-D-ribosyl)-5'-AMP + diphosphate + H(+). The protein operates within amino-acid biosynthesis; L-histidine biosynthesis; L-histidine from 5-phospho-alpha-D-ribose 1-diphosphate: step 2/9. This is Phosphoribosyl-ATP pyrophosphatase from Trichlorobacter lovleyi (strain ATCC BAA-1151 / DSM 17278 / SZ) (Geobacter lovleyi).